Here is a 1972-residue protein sequence, read N- to C-terminus: MAQKGQLSDDEKFLFVDKNFMNSPMAQADWVAKKLVWVPSEKQGFEAASIKEEKGDEVVVELVENGKKVTVGKDDIQKMNPPKFSKVEDMAELTCLNEASVLHNLRERYFSGLIYTYSGLFCVVVNPYKYLPIYSEKIVDMYKGKKRHEMPPHIYAIADTAYRSMLQDREDQSILCTGESGAGKTENTQKVIQYLAVVASSHKGKKDSSITGELEKQLLQANPILEAFGNAKTVKNDNSSRFGKFIRINFDVTGYIVGANIETYLLEKSRAIRQARDERTFHIFYYLLAGAKEKMKSDLLLESFNSYTFLSNGFVPIPAAQDDEMFQETLEAMSIMGFNEEEQLAILKVVSSVLQLGNIVFKKERNTDQASMPDNTAAQKVCHLVGINVTDFTRAILTPRIKVGRDVVQKAQTKEQADFAIEALAKATYERLFRWILSRVNKALDKTHRQGASFLGILDIAGFEIFEVNSFEQLCINYTNEKLQQLFNHTMFILEQEEYQREGIEWNFIDFGLDLQPSIELIERPNNPPGVLALLDEECWFPKATDKSFVEKLCSEQGNHPKFQKPKQLKDKTEFSIIHYAGKVDYNASAWLTKNMDPLNDNVTSLLNASSDKFVADLWKDVDRIVGLDQMAKMTESSLPSASKTKKGMFRTVGQLYKEQLGKLMATLRNTTANFVRCIIPNHEKRSGKLDAFLVLEQLRCNGVLEGIRICRQGFPNRIVFQEFRQRYEILAANAIPKGFMDGKQACILMIKALELDPNLYRIGQSKIFFRTGVLAHLEEERDLKITDVIMAFQAMCRGYLARKAFTKRQQQLTAMKVIQRNCAAYLKLRNWQWWRLFTKVKPLLQVTRQEEEMQAKEEEMQKITERQQKAETELKELEQKHTQLAEEKTLLQEQLQAETELYAESEEMRVRLAAKKQELEEILHEMEARLEEEEDRRQQLQAERKKMAQQMLDLEEQLEEEEAARQKLQLEKVTAEAKIKKLEDDILVMDDQNSKLSKERKLLEERVSDLTTNLAEEEEKAKNLTKLKSKHESMISELEVRLKKEEKSRQELEKLKRKLEGDASDFHEQIADLQAQIAELKMQLAKKEEELQAALARLDEEIAQKNNALKKIRELEGHISDLQEDLDSERAARNKAEKQKRDLGEELEALKTELEDTLDSTATQQELRAKREQEVTVLKKALDEETRSHEAQVQEMRQKHTQAVEELTEQLEQFKRAKANLDKSKQTLEKENADLAGELRVLGQAKQEVEHKKKKLEVQLQDLQSKCSDGERARAELSDKVHKLQNEVESVTGMLNEAEGKAIKLAKDVASLGSQLQDTQELLQEETRQKLNVSTKLRQLEDERNSLQDQLDEEMEAKQNLERHVSTLNIQLSDSKKKLQDFASTIEVMEEGKKRLQKEMEGLSQQYEEKAAAYDKLEKTKNRLQQELDDLVVDLDNQRQLVSNLEKKQKKFDQLLAEEKNISSKYADERDRAEAEAREKETKALSLARALEEALEAKEELERTNKMLKAEMEDLVSSKDDVGKNVHELEKSKRALETQMEEMKTQLEESEDDVQATEDAKLRLEVNMQALKGQFERDLQARDEQNEEKRRQLQRQLHEYETELEDERKQRALAAAAKKKLEGDLKDLELQADSAIKGREEAIKQLRKLQAQMKDFQRELDDARASRDEIFATSKENEKKAKSLEADLMQLQEDLAAAERARKQADLEKEELAEELASSLSGRNTLQDEKRRLEARIAQLEEELEEEQGNMEAMSDRVRKATLQAEQLSNELATERSTAQKNESARQQLERQNKELRSKLQEVEGAVKAKLKSTVAALEAKIAQLEEQVEQEAREKQAATKSLKQKDKKLKEVLLQVEDERKMAEQYKEQAEKGNTKVKQLKRQLEEAEEESQCINANRRKLQRELDEATESNEAMGREVNALKSKLRRGNEASFVPSRRAGGRRVIENTDGSEEEMDARDSDFNGTKASE.

A phosphoserine mark is found at S8, S23, and S40. The 51-residue stretch at 31–81 (VAKKLVWVPSEKQGFEAASIKEEKGDEVVVELVENGKKVTVGKDDIQKMNP) folds into the Myosin N-terminal SH3-like domain. Residues 85-783 (SKVEDMAELT…VLAHLEEERD (699 aa)) enclose the Myosin motor domain. Residue K129 is modified to N6,N6,N6-trimethyllysine. 178-185 (GESGAGKT) is an ATP binding site. Actin-binding stretches follow at residues 661–683 (LGKLMATLRNTTANFVRCIIPNH) and 762–776 (RIGQSKIFFRTGVLA). The region spanning 786 to 815 (ITDVIMAFQAMCRGYLARKAFTKRQQQLTA) is the IQ domain. Positions 844–1934 (LLQVTRQEEE…KSKLRRGNEA (1091 aa)) form a coiled coil. T1177 carries the phosphothreonine modification. Phosphoserine occurs at positions 1684 and 1722. Positions 1771 to 1788 (NELATERSTAQKNESARQ) are enriched in polar residues. Disordered stretches follow at residues 1771 to 1797 (NELATERSTAQKNESARQQLERQNKEL) and 1867 to 1972 (QYKE…KASE). Positions 1867-1876 (QYKEQAEKGN) are enriched in basic and acidic residues. Residues 1935–1972 (SFVPSRRAGGRRVIENTDGSEEEMDARDSDFNGTKASE) form a C-terminal region. Phosphothreonine is present on T1951. S1954 and S1971 each carry phosphoserine.

Belongs to the TRAFAC class myosin-kinesin ATPase superfamily. Myosin family. As to quaternary structure, muscle myosin is a hexameric protein that consists of 2 heavy chain subunits (MHC), 2 alkali light chain subunits (MLC) and 2 regulatory light chain subunits (MLC-2).

The protein localises to the melanosome. Its subcellular location is the cytoplasm. It is found in the myofibril. In terms of biological role, muscle contraction. The sequence is that of Myosin-11 (Myh11) from Mus musculus (Mouse).